Here is a 1008-residue protein sequence, read N- to C-terminus: PAN2-PAN3 deadenylation complex catalytic subunit PAN2 (1008 aa).

WD repeat units lie at residues 29 to 68 (GQLT…PYSR), 110 to 149 (PSLG…VTRV), 158 to 198 (HMAG…FSDV), 200 to 236 (VQDN…AMAP), and 277 to 316 (AEVA…SFAE). Residues 314-449 (FAEFSAPTAF…TCTEASMSSK (136 aa)) are linker. The region spanning 450–755 (KVPRLYRKLE…RTVMMVYAVG (306 aa)) is the USP domain. The region spanning 808–976 (AIDAEFVVLK…EDSHTALLLY (169 aa)) is the Exonuclease domain. Positions 810, 812, 915, and 968 each coordinate a divalent metal cation.

The protein belongs to the peptidase C19 family. PAN2 subfamily. Forms a heterotrimer with an asymmetric homodimer of the regulatory subunit PAN3 to form the poly(A)-nuclease (PAN) deadenylation complex. Requires a divalent metal cation as cofactor.

The protein resides in the cytoplasm. It catalyses the reaction Exonucleolytic cleavage of poly(A) to 5'-AMP.. Its activity is regulated as follows. Positively regulated by the regulatory subunit PAN3. Catalytic subunit of the poly(A)-nuclease (PAN) deadenylation complex, one of two cytoplasmic mRNA deadenylases involved in mRNA turnover. PAN specifically shortens poly(A) tails of RNA and the activity is stimulated by poly(A)-binding protein PAB1. PAN deadenylation is followed by rapid degradation of the shortened mRNA tails by the CCR4-NOT complex. Deadenylated mRNAs are then degraded by two alternative mechanisms, namely exosome-mediated 3'-5' exonucleolytic degradation, or deadenylation-dependent mRNA decaping and subsequent 5'-3' exonucleolytic degradation by XRN1. May also be involved in post-transcriptional maturation of mRNA poly(A) tails. The sequence is that of PAN2-PAN3 deadenylation complex catalytic subunit PAN2 from Yarrowia lipolytica (strain CLIB 122 / E 150) (Yeast).